Reading from the N-terminus, the 610-residue chain is UvrABC system protein C (610 aa).

The GIY-YIG domain maps to 16 to 94; that stretch reads SQPGVYRMYD…IKLYQPRYNV (79 aa). One can recognise a UVR domain in the interval 204 to 239; the sequence is DQVLTQLIARMEKASQDLAFEEAARIRDQIQAVRRV.

It belongs to the UvrC family. Interacts with UvrB in an incision complex.

It is found in the cytoplasm. Functionally, the UvrABC repair system catalyzes the recognition and processing of DNA lesions. UvrC both incises the 5' and 3' sides of the lesion. The N-terminal half is responsible for the 3' incision and the C-terminal half is responsible for the 5' incision. In Salmonella heidelberg (strain SL476), this protein is UvrABC system protein C.